A 334-amino-acid chain; its full sequence is Ferredoxin--NADP reductase (334 aa).

Residues Asp-33, Gln-41, Tyr-46, Ala-86, Phe-120, Asp-286, and Thr-327 each coordinate FAD.

This sequence belongs to the ferredoxin--NADP reductase type 2 family. As to quaternary structure, homodimer. FAD serves as cofactor.

The enzyme catalyses 2 reduced [2Fe-2S]-[ferredoxin] + NADP(+) + H(+) = 2 oxidized [2Fe-2S]-[ferredoxin] + NADPH. This is Ferredoxin--NADP reductase from Rickettsia akari (strain Hartford).